The chain runs to 201 residues: Small ribosomal subunit protein uS4c (201 aa).

Residues 20-43 (GLTSKRPRAGSDLRNQSRAGKKSQ) are disordered. The region spanning 89-150 (MRLDNILFRL…EQKSRVMIQN (62 aa)) is the S4 RNA-binding domain.

Belongs to the universal ribosomal protein uS4 family. As to quaternary structure, part of the 30S ribosomal subunit. Contacts protein S5. The interaction surface between S4 and S5 is involved in control of translational fidelity.

Its subcellular location is the plastid. The protein localises to the chloroplast. Functionally, one of the primary rRNA binding proteins, it binds directly to 16S rRNA where it nucleates assembly of the body of the 30S subunit. With S5 and S12 plays an important role in translational accuracy. In Populus alba (White poplar), this protein is Small ribosomal subunit protein uS4c (rps4).